The sequence spans 233 residues: LOB domain-containing protein 40 (233 aa).

The region spanning 3–109 (MSCNGCRVLR…VEAVMRGSPV (107 aa)) is the LOB domain. Positions 143-160 (KRRSRGACKEERNVRSLS) are enriched in basic and acidic residues. The segment at 143–183 (KRRSRGACKEERNVRSLSHESSLSHESPVSSEETTTEEPKT) is disordered. Over residues 161–175 (HESSLSHESPVSSEE) the composition is skewed to low complexity.

It belongs to the LOB domain-containing protein family. As to expression, expressed in roots and flowers.

The sequence is that of LOB domain-containing protein 40 (LBD40) from Arabidopsis thaliana (Mouse-ear cress).